Reading from the N-terminus, the 727-residue chain is Phosphoribosylformylglycinamidine synthase subunit PurL (727 aa).

Residue His-47 is part of the active site. Residues Tyr-50 and Lys-82 each coordinate ATP. Mg(2+) is bound at residue Glu-84. Substrate-binding positions include 85–88 and Arg-107; that span reads SHNH. Catalysis depends on His-86, which acts as the Proton acceptor. Residue Asp-108 coordinates Mg(2+). Gln-229 contacts substrate. Asp-257 provides a ligand contact to Mg(2+). 301–303 is a substrate binding site; that stretch reads ESQ. Residues Asp-486 and Gly-523 each coordinate ATP. Asn-524 is a Mg(2+) binding site. Ser-526 is a substrate binding site.

The protein belongs to the FGAMS family. As to quaternary structure, monomer. Part of the FGAM synthase complex composed of 1 PurL, 1 PurQ and 2 PurS subunits.

The protein resides in the cytoplasm. It catalyses the reaction N(2)-formyl-N(1)-(5-phospho-beta-D-ribosyl)glycinamide + L-glutamine + ATP + H2O = 2-formamido-N(1)-(5-O-phospho-beta-D-ribosyl)acetamidine + L-glutamate + ADP + phosphate + H(+). It functions in the pathway purine metabolism; IMP biosynthesis via de novo pathway; 5-amino-1-(5-phospho-D-ribosyl)imidazole from N(2)-formyl-N(1)-(5-phospho-D-ribosyl)glycinamide: step 1/2. In terms of biological role, part of the phosphoribosylformylglycinamidine synthase complex involved in the purines biosynthetic pathway. Catalyzes the ATP-dependent conversion of formylglycinamide ribonucleotide (FGAR) and glutamine to yield formylglycinamidine ribonucleotide (FGAM) and glutamate. The FGAM synthase complex is composed of three subunits. PurQ produces an ammonia molecule by converting glutamine to glutamate. PurL transfers the ammonia molecule to FGAR to form FGAM in an ATP-dependent manner. PurS interacts with PurQ and PurL and is thought to assist in the transfer of the ammonia molecule from PurQ to PurL. The protein is Phosphoribosylformylglycinamidine synthase subunit PurL of Petrotoga mobilis (strain DSM 10674 / SJ95).